Consider the following 914-residue polypeptide: Protein translocase subunit SecA (914 aa).

Residues glutamine 87, 105–109 (GEGKT), and aspartate 508 contribute to the ATP site. Cysteine 898, cysteine 900, cysteine 909, and histidine 910 together coordinate Zn(2+).

The protein belongs to the SecA family. In terms of assembly, monomer and homodimer. Part of the essential Sec protein translocation apparatus which comprises SecA, SecYEG and auxiliary proteins SecDF-YajC and YidC. Zn(2+) is required as a cofactor.

It localises to the cell inner membrane. Its subcellular location is the cytoplasm. It catalyses the reaction ATP + H2O + cellular proteinSide 1 = ADP + phosphate + cellular proteinSide 2.. Part of the Sec protein translocase complex. Interacts with the SecYEG preprotein conducting channel. Has a central role in coupling the hydrolysis of ATP to the transfer of proteins into and across the cell membrane, serving both as a receptor for the preprotein-SecB complex and as an ATP-driven molecular motor driving the stepwise translocation of polypeptide chains across the membrane. The protein is Protein translocase subunit SecA of Xylella fastidiosa (strain M23).